Consider the following 359-residue polypeptide: EGF-like domain containing protein 2 (359 aa).

Residues 1–20 (MPPFISHFFLLSTFASLALC) form the signal peptide. EGF-like domains follow at residues 21-55 (SFYC…FNCG) and 61-93 (ISAA…PTCQ). Disulfide bonds link Cys24–Cys37, Cys31–Cys43, Cys45–Cys54, Cys65–Cys75, Cys69–Cys81, and Cys83–Cys92.

Prismatic layer of shell (at protein level). Expressed primarily in the mantle with highest level in the mantle edge and lower level in the mantle pallium.

It localises to the secreted. In Margaritifera margaritifera (Freshwater pearl mussel), this protein is EGF-like domain containing protein 2.